The sequence spans 164 residues: uncharacterized protein (164 aa).

Positions 46–142 (GRSPEQKEHV…APDNSIYDTL (97 aa)) are disordered.

This is an uncharacterized protein from Caenorhabditis elegans.